Reading from the N-terminus, the 588-residue chain is Nuclear hormone receptor family member nhr-23 (588 aa).

Residues 50–73 (LHAKSSLQPSLSIETPKSKENDES) are disordered. The span at 52 to 64 (AKSSLQPSLSIET) shows a compositional bias: polar residues. Positions 160-235 (VIPCKVCGDK…LGMSRDAVKF (76 aa)) form a DNA-binding region, nuclear receptor. NR C4-type zinc fingers lie at residues 163-183 (CKVCGDKSSGVHYGVITCEGC) and 199-223 (CPRQKNCVVDRVNRNRCQYCRLKKC). The NR LBD domain occupies 345 to 586 (PEEDVATRVI…ALYKELFTAD (242 aa)).

The protein belongs to the nuclear hormone receptor family. NR1 subfamily. As to expression, expressed in the germline and oocytes and is a maternal gene product. In males and sperm-producing hermaphrodites, expressed in early pachytene spermatocytes, increasing in level throughout late pachytene. Expression is undetectable in meiotically dividing spermatocytes or mature spermatids.

It localises to the nucleus. Orphan nuclear receptor. Transcription factor. Modulates expression of target genes, such as Period protein homolog lin-42 and microRNA let-7, by binding to hormone response elements (HRE). Involved in promoting oscillatory expression of the primary transcripts of let-7 and paralogous microRNAs miR-48, miR-84, and miR-241. Plays a role in normal development and required to regulate each larval molt. Involved in regulating both the frequency and number of molts, acting as part of a negative feedback loop with the let-7 family of microRNAs, perhaps contributing to a self-sustaining molecular-genetic oscillator. Positively modulates expression of collagen and hedgehog-related genes. Involved in development of the gonad and associated epidermal structures. Required in spermatogenesis, acting following the sperm/oocyte cell fate decision, downstream of the canonical sex-determination pathway. Involved in regulating formation of the sperm-specific fibrous body-membranous organelle (FB-MO) complexes, acting independently of transcription regulator spe-44. The chain is Nuclear hormone receptor family member nhr-23 from Caenorhabditis elegans.